The chain runs to 151 residues: Proline-rich acidic protein 1 (151 aa).

An N-terminal signal peptide occupies residues 1–20 (MRRLLLVTSLVVVLLWEAGA). The segment at 71–151 (LTTEEKPRGQ…EDQDHIYHPQ (81 aa)) is disordered.

In terms of assembly, interacts with isoform 1 and isoform 3 of MAD1L1. Interacts with MTTP. Highly expressed in the intestinal epithelial cells (at protein level). Abundantly expressed in the epithelial cells of the liver, kidney and cervix. Significantly down-regulated in hepatocellular carcinoma and right colon adenocarcinoma compared with the respective adjacent normal tissues. Expressed in epididymis (at protein level).

It localises to the secreted. The protein resides in the endoplasmic reticulum. Functionally, lipid-binding protein which promotes lipid absorption by facilitating MTTP-mediated lipid transfer (mainly triglycerides and phospholipids) and MTTP-mediated apoB lipoprotein assembly and secretion. Protects the gastrointestinal epithelium from irradiation-induced apoptosis. May play an important role in maintaining normal growth homeostasis in epithelial cells. Involved in p53/TP53-dependent cell survival after DNA damage. May down-regulate the expression of MAD1L1 and exert a suppressive role in mitotic spindle assembly checkpoint in hepatocellular carcinomas. The protein is Proline-rich acidic protein 1 (PRAP1) of Homo sapiens (Human).